The sequence spans 115 residues: uncharacterized protein (115 aa).

This is an uncharacterized protein from Aquifex aeolicus (strain VF5).